We begin with the raw amino-acid sequence, 170 residues long: Cathelicidin antimicrobial peptide (170 aa).

The N-terminal stretch at 1 to 30 (MKTQRDSPSLGRWSLVLLLLGLVMPLAIVA) is a signal peptide. Positions 31 to 131 (QVLSYQEAVL…DISCDKDNRR (101 aa)) are cleaved as a propeptide — cathelin-like domain (CLD). 2 disulfides stabilise this stretch: C86–C97 and C108–C125. The interval 150 to 162 (FKRIVQRIKDFLQ) is active core.

It belongs to the cathelicidin family. Monomer, homodimer or homotrimer (in vitro). Oligomerizes as tetra- or hexamer in solution (in vitro). Post-translationally, proteolytically cleaved by proteinase PRTN3 into antibacterial peptide LL-37. Proteolytically cleaved by cathepsin CTSG and neutrophil elastase ELANE. In terms of processing, resistant to proteolytic degradation in solution, and when bound to both zwitterionic (mimicking mammalian membranes) and negatively charged membranes (mimicking bacterial membranes). After secretion onto the skin surface, the CAMP gene product is processed by a serine protease-dependent mechanism into multiple novel antimicrobial peptides distinct from and shorter than cathelicidin LL-37. These peptides show enhanced antimicrobial action, acquiring the ability to kill skin pathogens such as S.aureus, E.coli and C.albicans. These peptides have lost the ability to stimulate CXCL8/IL8 release from keratinocytes. The peptides act synergistically, killing bacteria at lower concentrations when present together, and maintain activity at increased salt condition.

Its subcellular location is the secreted. The protein localises to the vesicle. Functionally, antimicrobial protein that is an integral component of the innate immune system. Binds to bacterial lipopolysaccharides (LPS). Acts via neutrophil N-formyl peptide receptors to enhance the release of CXCL2. Postsecretory processing generates multiple cathelicidin antimicrobial peptides with various lengths which act as a topical antimicrobial defense in sweat on skin. The unprocessed precursor form, cathelicidin antimicrobial peptide, inhibits the growth of Gram-negative E.coli and E.aerogenes with efficiencies comparable to that of the mature peptide LL-37 (in vitro). In terms of biological role, antimicrobial peptide that is an integral component of the innate immune system. Binds to bacterial lipopolysaccharides (LPS). Causes membrane permeabilization by forming transmembrane pores (in vitro). Causes lysis of E.coli. Exhibits antimicrobial activity against Gram-negative bacteria such as P.aeruginosa, S.typhimurium, E.aerogenes, E.coli and P.syringae, Gram-positive bacteria such as L.monocytogenes, S.epidermidis, S.pyogenes and S.aureus, as well as vancomycin-resistant enterococci (in vitro). Exhibits antimicrobial activity against methicillin-resistant S.aureus, P.mirabilis, and C.albicans in low-salt media, but not in media containing 100 mM NaCl (in vitro). Forms chiral supramolecular assemblies with quinolone signal (PQS) molecules of P.aeruginosa, which may lead to interference of bacterial quorum signaling and perturbance of bacterial biofilm formation. May form supramolecular fiber-like assemblies on bacterial membranes. Induces cytokine and chemokine producation as well as TNF/TNFA and CSF2/GMCSF production in normal human keratinocytes. Exhibits hemolytic activity against red blood cells. Exhibits antimicrobial activity against E.coli and B.megaterium (in vitro). This is Cathelicidin antimicrobial peptide from Nomascus gabriellae (Red-cheeked gibbon).